The chain runs to 454 residues: Oxygen-dependent coproporphyrinogen-III oxidase, mitochondrial (454 aa).

A mitochondrion-targeting transit peptide spans 1–110 (MALQLGRLSS…MLPKTSGTRA (110 aa)). Positions 43 to 70 (AAGRVCRPPGPAGTEQSRGLGHGSTSRG) are disordered. Position 112 is a phosphoserine (Ser112). Residues 193-202 (VLQDGCVFEK) are important for dimerization. Residue Ser244 coordinates coproporphyrinogen III. The active-site Proton donor is His258. 260–262 (NYR) contacts coproporphyrinogen III. Positions 392 to 428 (YVEFNLLYDRGTKFGLFTPGSRIESILMSLPLTARWE) are important for dimerization. Lys404 is subject to N6-acetyllysine; alternate. Position 404 is an N6-succinyllysine; alternate (Lys404). 411-413 (GSR) contributes to the coproporphyrinogen III binding site.

This sequence belongs to the aerobic coproporphyrinogen-III oxidase family. As to quaternary structure, homodimer.

The protein localises to the mitochondrion intermembrane space. It catalyses the reaction coproporphyrinogen III + O2 + 2 H(+) = protoporphyrinogen IX + 2 CO2 + 2 H2O. It functions in the pathway porphyrin-containing compound metabolism; protoporphyrin-IX biosynthesis; protoporphyrinogen-IX from coproporphyrinogen-III (O2 route): step 1/1. Catalyzes the aerobic oxidative decarboxylation of propionate groups of rings A and B of coproporphyrinogen-III to yield the vinyl groups in protoporphyrinogen-IX and participates to the sixth step in the heme biosynthetic pathway. In Homo sapiens (Human), this protein is Oxygen-dependent coproporphyrinogen-III oxidase, mitochondrial.